Reading from the N-terminus, the 266-residue chain is Non-structural maintenance of chromosomes element 1 homolog (266 aa).

The interval Met-1–Ala-102 is interaction with NSMCE3. An RING-type; atypical zinc finger spans residues Cys-191–Asn-232. Residues Glu-246–His-266 form a disordered region. Position 251 is a phosphoserine (Ser-251). Basic residues predominate over residues Ser-256–His-266.

Belongs to the NSE1 family. Component of the SMC5-SMC6 complex which consists at least of SMC5, SMC6, NSMCE2, NSMCE1, NSMCE4A or EID3 and NSMCE3. NSMCE1, NSMCE4A or EID3 and NSMCE3 probably form a subcomplex that bridges the head domains of the SMC5-SMC6 heterodimer. Interacts with NSMCE3. Interacts with MAGEF1. Ubiquitinated.

The protein resides in the nucleus. The protein localises to the chromosome. It is found in the telomere. It catalyses the reaction S-ubiquitinyl-[E2 ubiquitin-conjugating enzyme]-L-cysteine + [acceptor protein]-L-lysine = [E2 ubiquitin-conjugating enzyme]-L-cysteine + N(6)-ubiquitinyl-[acceptor protein]-L-lysine.. Functionally, RING-type zinc finger-containing E3 ubiquitin ligase that assembles with melanoma antigen protein (MAGE) to catalyze the direct transfer of ubiquitin from E2 ubiquitin-conjugating enzyme to a specific substrate. Within MAGE-RING ubiquitin ligase complex, MAGE stimulates and specifies ubiquitin ligase activity likely through recruitment and/or stabilization of the E2 ubiquitin-conjugating enzyme at the E3:substrate complex. Involved in maintenance of genome integrity, DNA damage response and DNA repair. NSMCE3/MAGEG1 and NSMCE1 ubiquitin ligase are components of SMC5-SMC6 complex and may positively regulate homologous recombination-mediated DNA repair. MAGEF1-NSMCE1 ubiquitin ligase promotes proteasomal degradation of MMS19, a key component of the cytosolic iron-sulfur protein assembly (CIA) machinery. Down-regulation of MMS19 impairs the activity of several DNA repair and metabolism enzymes such as ERCC2/XPD, FANCJ, RTEL1 and POLD1 that require iron-sulfur clusters as cofactors. The sequence is that of Non-structural maintenance of chromosomes element 1 homolog from Homo sapiens (Human).